Consider the following 158-residue polypeptide: NADH-quinone oxidoreductase subunit B 1 (158 aa).

Cysteine 37, cysteine 38, cysteine 102, and cysteine 132 together coordinate [4Fe-4S] cluster.

Belongs to the complex I 20 kDa subunit family. As to quaternary structure, NDH-1 is composed of 14 different subunits. Subunits NuoB, C, D, E, F, and G constitute the peripheral sector of the complex. Requires [4Fe-4S] cluster as cofactor.

It localises to the cell inner membrane. It catalyses the reaction a quinone + NADH + 5 H(+)(in) = a quinol + NAD(+) + 4 H(+)(out). Its function is as follows. NDH-1 shuttles electrons from NADH, via FMN and iron-sulfur (Fe-S) centers, to quinones in the respiratory chain. Couples the redox reaction to proton translocation (for every two electrons transferred, four hydrogen ions are translocated across the cytoplasmic membrane), and thus conserves the redox energy in a proton gradient. The sequence is that of NADH-quinone oxidoreductase subunit B 1 from Chromobacterium violaceum (strain ATCC 12472 / DSM 30191 / JCM 1249 / CCUG 213 / NBRC 12614 / NCIMB 9131 / NCTC 9757 / MK).